Here is a 155-residue protein sequence, read N- to C-terminus: HTH-type transcriptional regulator IscR (155 aa).

One can recognise an HTH rrf2-type domain in the interval 2–136 (KLSTKGRYAM…HQTRLSDIIK (135 aa)). The segment at residues 30–53 (LAEVSKRQDISLPYLEQLFVKLRR) is a DNA-binding region (H-T-H motif). The interval 141 to 145 (PCPAV) is heme regulatory motif (HRM). Residue Cys142 participates in [2Fe-2S] cluster binding.

The cofactor is [2Fe-2S] cluster.

In terms of biological role, regulates the transcription of several operons and genes involved in the biogenesis of Fe-S clusters and Fe-S-containing proteins. Functions as a transcriptional repressor of genes involved in iron metabolism by directly binding to the promoter region of genes preceded by the Iron-Rhodo-box motif. Binds to iscR and hemP promoter regions independently of an Fe-S cluster, but their transcriptional repression is Fe-S cluster-dependent. Seems to activate some target genes in a Fe-S cluster-independent manner. Negatively regulates its own transcription in the presence of iron only. The chain is HTH-type transcriptional regulator IscR from Cereibacter sphaeroides (strain ATCC 17023 / DSM 158 / JCM 6121 / CCUG 31486 / LMG 2827 / NBRC 12203 / NCIMB 8253 / ATH 2.4.1.) (Rhodobacter sphaeroides).